A 373-amino-acid polypeptide reads, in one-letter code: Flagellar P-ring protein 1 (373 aa).

An N-terminal signal peptide occupies residues M1–A24.

It belongs to the FlgI family. The basal body constitutes a major portion of the flagellar organelle and consists of four rings (L,P,S, and M) mounted on a central rod.

The protein resides in the periplasm. It localises to the bacterial flagellum basal body. In terms of biological role, assembles around the rod to form the L-ring and probably protects the motor/basal body from shearing forces during rotation. This is Flagellar P-ring protein 1 from Hahella chejuensis (strain KCTC 2396).